Consider the following 69-residue polypeptide: Alpha-conotoxin SrIA/SrIB (69 aa).

The N-terminal stretch at 1-21 (MGMRMMFTVFLLVVLATTVVS) is a signal peptide. Residues 22–48 (FTSDSAFDSRNVAANDKVSDMIALTAR) constitute a propeptide that is removed on maturation. 2 cysteine pairs are disulfide-bonded: Cys-51–Cys-57 and Cys-52–Cys-65. The ser-Xaa-Pro motif, crucial for potent interaction with nAChR stretch occupies residues 53–55 (SRP). Pro-55 carries the post-translational modification 4-hydroxyproline; in form Sr1A and Sr1B. A 4-carboxyglutamate; in form Sr1A modification is found at Glu-60. Glu-63 carries the 4-carboxyglutamate; in form Sr1A and Sr1B modification. Residue Gly-66 is modified to Glycine amide; in form Sr1A and Sr1B.

The protein belongs to the conotoxin A superfamily. Occurs in 2 forms which differ in the post-translational modification of Glu-60. In form SrA1 Glu-60 is 4-carboxyglutamate while in form SrA2 Glu-60 is unmodified. In terms of tissue distribution, expressed by the venom duct.

The protein localises to the secreted. In terms of biological role, alpha-conotoxins act on postsynaptic membranes, they bind to the nicotinic acetylcholine receptors (nAChR) and thus inhibit them. Has weak blocking effects on muscle nAChR composed of alpha-1/beta-1/gamma/delta subunits and the central nervous system nAChR composed of alpha-4/beta-2 subunits. Does not detectably affect the peripheral nervous system nAChR composed of alpha-3/beta-4 subunits. Low toxin concentrations potentiate currents in muscle nAChR composed of alpha-1/beta-1/gamma/delta subunits and central nervous system nAChR composed of alpha-4/beta-2 subunits, but not the peripheral nervous system nAChR composed of alpha-3/beta-4 subunits. This is Alpha-conotoxin SrIA/SrIB from Conus spurius (Alphabet cone).